The chain runs to 192 residues: Leucine-rich repeat-containing protein 51 (192 aa).

LRR repeat units follow at residues 49–71 (SLTQSLWLNNNVLNDLRDFNQVA), 80–101 (NLAWIDLSFNDLTSIDPVLTTF), and 103–124 (NLSVLYLHGNSIQHLGEVNKLA). The LRRCT domain occupies 137–175 (NPMEEEKGYRQYVLCTLPHITTFDFSGVTKADRTTAEVW).

The protein localises to the cytoplasm. This Macaca mulatta (Rhesus macaque) protein is Leucine-rich repeat-containing protein 51.